The primary structure comprises 71 residues: Augerpeptide-s7a (71 aa).

An N-terminal signal peptide occupies residues 1 to 20 (MSALKFVLICGLVLLLIETI). Positions 21 to 29 (PGVSLNLMR) are excised as a propeptide. 3 disulfide bridges follow: C36–C48, C42–C65, and C47–C68.

In terms of tissue distribution, expressed by the venom duct.

It localises to the secreted. Elicits an uncoordinated twisting syndrome when injected into C.elegans, but has no effect on mice. This Terebra subulata (Chocolate spotted auger) protein is Augerpeptide-s7a.